Reading from the N-terminus, the 77-residue chain is uncharacterized protein (77 aa).

Basic and acidic residues-rich tracts occupy residues 1 to 24 and 37 to 58; these read CPVA…EDQR and EGPK…ERGP. Residues 1–77 are disordered; the sequence is CPVAEEHFLV…RHGPKRKPAK (77 aa). Basic residues predominate over residues 66 to 77; the sequence is RPRHGPKRKPAK.

This is an uncharacterized protein from Macaca fascicularis (Crab-eating macaque).